A 453-amino-acid chain; its full sequence is Neuraminidase (453 aa).

Residues 1 to 6 (MNPNQK) are Intravirion-facing. The chain crosses the membrane as a helical span at residues 7-27 (IITIGSICMVVGIISLILQIG). The involved in apical transport and lipid raft association stretch occupies residues 11 to 33 (GSICMVVGIISLILQIGNIISIW). Over 28–453 (NIISIWISHS…GAELPFTIDK (426 aa)) the chain is Virion surface. Residues 36-74 (HSIQTGNQNHTGICNQGIITYNVVAGQDSTSVILTGNSS) are hypervariable stalk region. N-linked (GlcNAc...) asparagine; by host glycans are attached at residues N44 and N72. The tract at residues 75-453 (LCPIRGWAIH…GAELPFTIDK (379 aa)) is head of neuraminidase. Disulfide bonds link C76–C401, C108–C113, C168–C215, C217–C222, C263–C276, C265–C274, C302–C319, and C405–C430. Substrate is bound at residue R102. N130 carries an N-linked (GlcNAc...) asparagine; by host glycan. The Proton donor/acceptor role is filled by D135. R136 is a binding site for substrate. The N-linked (GlcNAc...) asparagine; by host glycan is linked to N219. 261–262 (EE) is a substrate binding site. R277 serves as a coordination point for substrate. Ca(2+) is bound by residues D278, G282, D308, and N328. Position 352 (R352) interacts with substrate. Y386 (nucleophile) is an active-site residue.

The protein belongs to the glycosyl hydrolase 34 family. As to quaternary structure, homotetramer. Ca(2+) is required as a cofactor. In terms of processing, N-glycosylated.

The protein resides in the virion membrane. The protein localises to the host apical cell membrane. It catalyses the reaction Hydrolysis of alpha-(2-&gt;3)-, alpha-(2-&gt;6)-, alpha-(2-&gt;8)- glycosidic linkages of terminal sialic acid residues in oligosaccharides, glycoproteins, glycolipids, colominic acid and synthetic substrates.. Inhibited by the neuraminidase inhibitors zanamivir (Relenza) and oseltamivir (Tamiflu). These drugs interfere with the release of progeny virus from infected cells and are effective against all influenza strains. Resistance to neuraminidase inhibitors is quite rare. In terms of biological role, unlike other strains, A/WSN/33 neuraminidase binds and activates plasminogen into plasmin in the vicinity of HA so that activated plasmin cleaves HA rendering the virus infectious. Functionally, catalyzes the removal of terminal sialic acid residues from viral and cellular glycoconjugates. Cleaves off the terminal sialic acids on the glycosylated HA during virus budding to facilitate virus release. Additionally helps virus spread through the circulation by further removing sialic acids from the cell surface. These cleavages prevent self-aggregation and ensure the efficient spread of the progeny virus from cell to cell. Otherwise, infection would be limited to one round of replication. Described as a receptor-destroying enzyme because it cleaves a terminal sialic acid from the cellular receptors. May facilitate viral invasion of the upper airways by cleaving the sialic acid moieties on the mucin of the airway epithelial cells. Likely to plays a role in the budding process through its association with lipid rafts during intracellular transport. May additionally display a raft-association independent effect on budding. Plays a role in the determination of host range restriction on replication and virulence. Sialidase activity in late endosome/lysosome traffic seems to enhance virus replication. In Influenza A virus (strain A/Wilson-Smith/1933 H1N1) (Influenza A virus (strain A/WS/1933 H1N1)), this protein is Neuraminidase.